The following is a 207-amino-acid chain: 3-demethoxyubiquinol 3-hydroxylase (207 aa).

Positions 22–32 are enriched in basic and acidic residues; that stretch reads ERANPADRLAP. Residues 22-41 are disordered; it reads ERANPADRLAPETEQMNPEE. Glu-56, Glu-86, His-89, Glu-138, Glu-170, and His-173 together coordinate Fe cation.

The protein belongs to the COQ7 family. It depends on Fe cation as a cofactor.

It is found in the cell membrane. It catalyses the reaction a 5-methoxy-2-methyl-3-(all-trans-polyprenyl)benzene-1,4-diol + AH2 + O2 = a 3-demethylubiquinol + A + H2O. Its pathway is cofactor biosynthesis; ubiquinone biosynthesis. In terms of biological role, catalyzes the hydroxylation of 2-nonaprenyl-3-methyl-6-methoxy-1,4-benzoquinol during ubiquinone biosynthesis. This Cupriavidus metallidurans (strain ATCC 43123 / DSM 2839 / NBRC 102507 / CH34) (Ralstonia metallidurans) protein is 3-demethoxyubiquinol 3-hydroxylase.